Reading from the N-terminus, the 488-residue chain is Microtubule-destabilizing protein 60 (488 aa).

Over residues 25-56 (AQEVSRFSENSNPNFVSHSTPLEKSSKSSAQK) the composition is skewed to polar residues. Disordered regions lie at residues 25–71 (AQEV…VFSP), 262–304 (HASV…TKKQ), and 436–457 (DRPF…PKFN). Positions 264–280 (SVSSSWDNSVSSLNSNG) are enriched in low complexity.

It belongs to the TPX2 family.

Its subcellular location is the cytoplasm. The protein localises to the cytoskeleton. Its function is as follows. Binds directly to microtubules. Microtubule-destabilizing protein involved in the PIF3-dependent positive regulation of hypocotyl cell elongation via the modulation of cortical microtubules dynamic in response to light and ethylene signaling. Promotes submergence-induced and ethylene-dependent underwater hypocotyl elongation. This is Microtubule-destabilizing protein 60 from Arabidopsis thaliana (Mouse-ear cress).